Here is a 464-residue protein sequence, read N- to C-terminus: Methionine aminopeptidase 2 (464 aa).

Positions methionine 1–glutamate 86 are disordered. Positions glycine 43–aspartate 54 are enriched in acidic residues. Over residues lysine 72–asparagine 83 the composition is skewed to basic residues. A substrate-binding site is contributed by histidine 216. 3 residues coordinate a divalent metal cation: aspartate 237, aspartate 248, and histidine 317. Histidine 325 provides a ligand contact to substrate. Residues glutamate 350 and glutamate 445 each contribute to the a divalent metal cation site.

It belongs to the peptidase M24A family. Methionine aminopeptidase eukaryotic type 2 subfamily. It depends on Co(2+) as a cofactor. Zn(2+) is required as a cofactor. Mn(2+) serves as cofactor. Requires Fe(2+) as cofactor.

The protein localises to the cytoplasm. It carries out the reaction Release of N-terminal amino acids, preferentially methionine, from peptides and arylamides.. In terms of biological role, cotranslationally removes the N-terminal methionine from nascent proteins. The N-terminal methionine is often cleaved when the second residue in the primary sequence is small and uncharged (Met-Ala-, Cys, Gly, Pro, Ser, Thr, or Val). This is Methionine aminopeptidase 2 from Ajellomyces capsulatus (strain NAm1 / WU24) (Darling's disease fungus).